Reading from the N-terminus, the 510-residue chain is Ribose import ATP-binding protein RbsA 1 (510 aa).

2 consecutive ABC transporter domains span residues Leu-20–Asp-256 and Val-266–Ala-510. Residue Gly-52–Ser-59 participates in ATP binding.

It belongs to the ABC transporter superfamily. Ribose importer (TC 3.A.1.2.1) family. The complex is composed of an ATP-binding protein (RbsA), two transmembrane proteins (RbsC) and a solute-binding protein (RbsB).

It is found in the cell inner membrane. The enzyme catalyses D-ribose(out) + ATP + H2O = D-ribose(in) + ADP + phosphate + H(+). Part of the ABC transporter complex RbsABC involved in ribose import. Responsible for energy coupling to the transport system. The sequence is that of Ribose import ATP-binding protein RbsA 1 from Agrobacterium fabrum (strain C58 / ATCC 33970) (Agrobacterium tumefaciens (strain C58)).